The sequence spans 176 residues: Adipose-secreted signaling protein (176 aa).

A disordered region spans residues 1 to 30 (MATAGKGSKGKGTGVRFTPEGTQGHPQEGT). Residues 20–30 (EGTQGHPQEGT) are compositionally biased toward polar residues.

This sequence belongs to the ADISSP family.

Functionally, may be involved in thermogenesis and glucose homeostasis. The sequence is that of Adipose-secreted signaling protein from Taeniopygia guttata (Zebra finch).